A 29-amino-acid polypeptide reads, in one-letter code: Glucagon (29 aa).

Belongs to the glucagon family.

The protein resides in the secreted. Functionally, glucagon plays a key role in glucose metabolism and homeostasis. Regulates blood glucose by increasing gluconeogenesis and decreasing glycolysis. The polypeptide is Glucagon (GCG) (Meleagris gallopavo (Wild turkey)).